Here is a 107-residue protein sequence, read N- to C-terminus: MAAQNPLADIQVYKRYKAKRRMEGQKKNSCTIAYIDSLQYYCRRSLSHKSCFPFPSQHAFSRPLPLSESYETWHALELAFCLTRPYCTFHSSLEISSQQLTLRPPLG.

This is an uncharacterized protein from Saccharomyces cerevisiae (strain ATCC 204508 / S288c) (Baker's yeast).